The sequence spans 831 residues: Probable beta-glucosidase H (831 aa).

N-linked (GlcNAc...) asparagine glycosylation occurs at Asn13. Residue Asp225 is part of the active site. Positions 389 to 549 (RLLSNAVIHF…DAEEMINRAV (161 aa)) constitute a PA14 domain. N-linked (GlcNAc...) asparagine glycosylation is found at Asn474, Asn514, Asn604, Asn629, Asn726, and Asn823.

The protein belongs to the glycosyl hydrolase 3 family.

The protein resides in the secreted. The enzyme catalyses Hydrolysis of terminal, non-reducing beta-D-glucosyl residues with release of beta-D-glucose.. The protein operates within glycan metabolism; cellulose degradation. Functionally, beta-glucosidases are one of a number of cellulolytic enzymes involved in the degradation of cellulosic biomass. Catalyzes the last step releasing glucose from the inhibitory cellobiose. In Emericella nidulans (strain FGSC A4 / ATCC 38163 / CBS 112.46 / NRRL 194 / M139) (Aspergillus nidulans), this protein is Probable beta-glucosidase H (bglH).